The following is a 360-amino-acid chain: NAD(P)H-quinone oxidoreductase subunit 1, chloroplastic (360 aa).

9 helical membrane passes run 27-47 (IWIF…VLVI), 98-118 (FSIG…VIPF), 129-149 (IGIF…LMSG), 165-185 (AAQS…ISLL), 203-223 (FWGW…ISSL), 248-268 (YSGI…LISS), 269-289 (LFVT…ISIL), 297-317 (IFGT…FLFI), and 340-360 (FLLP…LFSL).

It belongs to the complex I subunit 1 family. NDH is composed of at least 16 different subunits, 5 of which are encoded in the nucleus.

It is found in the plastid. The protein resides in the chloroplast thylakoid membrane. The catalysed reaction is a plastoquinone + NADH + (n+1) H(+)(in) = a plastoquinol + NAD(+) + n H(+)(out). The enzyme catalyses a plastoquinone + NADPH + (n+1) H(+)(in) = a plastoquinol + NADP(+) + n H(+)(out). Functionally, NDH shuttles electrons from NAD(P)H:plastoquinone, via FMN and iron-sulfur (Fe-S) centers, to quinones in the photosynthetic chain and possibly in a chloroplast respiratory chain. The immediate electron acceptor for the enzyme in this species is believed to be plastoquinone. Couples the redox reaction to proton translocation, and thus conserves the redox energy in a proton gradient. This chain is NAD(P)H-quinone oxidoreductase subunit 1, chloroplastic, found in Barbarea verna (Land cress).